The chain runs to 252 residues: Chitooligosaccharide deacetylase (252 aa).

His61 and His125 together coordinate Mg(2+).

Belongs to the YdjC deacetylase family. ChbG subfamily. Homodimer. Requires Mg(2+) as cofactor.

The protein localises to the cytoplasm. The catalysed reaction is N,N'-diacetylchitobiose + H2O = N-acetyl-beta-D-glucosaminyl-(1-&gt;4)-D-glucosamine + acetate. The enzyme catalyses diacetylchitobiose-6'-phosphate + H2O = N'-monoacetylchitobiose-6'-phosphate + acetate. It functions in the pathway glycan degradation; chitin degradation. In terms of biological role, involved in the degradation of chitin. ChbG is essential for growth on the acetylated chitooligosaccharides chitobiose and chitotriose but is dispensable for growth on cellobiose and chitosan dimer, the deacetylated form of chitobiose. Deacetylation of chitobiose-6-P and chitotriose-6-P is necessary for both the activation of the chb promoter by the regulatory protein ChbR and the hydrolysis of phosphorylated beta-glucosides by the phospho-beta-glucosidase ChbF. Catalyzes the removal of only one acetyl group from chitobiose-6-P to yield monoacetylchitobiose-6-P, the inducer of ChbR and the substrate of ChbF. The polypeptide is Chitooligosaccharide deacetylase (Escherichia coli (strain 55989 / EAEC)).